Reading from the N-terminus, the 158-residue chain is Chromobox protein homolog 7 (158 aa).

A Chromo domain is found at 11–69 (FAVESIRKKRVRKGKVEYLVKWKGWPPKYSTWEPEEHILDPRLVMAYEEKEERDRASGY). A disordered region spans residues 60–127 (KEERDRASGY…WTPTLPSSEV (68 aa)). Residues 68–78 (GYRKRGPKPRR) show a composition bias toward basic residues.

As to quaternary structure, component of a PRC1-like complex. Distinct PRC1-like core complexes are composed of a RING1 subunit (RING1B or RING1A), one of the six PCGF proteins (PCGF1-6), one PHC protein (PHC1-3) and one of the CBX proteins (CBX2, CBX4, CBX6, CBX7 or CBX8). The composition of the PRC1 complex may differ between the PRC1 complex in pluripotent embryonic stem cells containing RNF2, CBX7 and PCGF2, and the PRC1 complex in differentiating cells containing RNF2, CBX2, CBX4 and BMI1. Interacts with RING1. Interacts with RNF2, PHC1 and PCGF2. Interacts (via chromodomain) with histone H3K9Me3 and H3K27me3. Interacts with H3K9Me2 and H4K20Me1. Interacts (via chromodomain) with single-stranded and double-stranded RNA; RNA binding seems to be required for the localization to chromatin. Interacts with PCGF1, PCGF3, PCGF5 and PCGF6. As to expression, expressed in embryonic stem cells.

The protein resides in the nucleus. It is found in the chromosome. In terms of biological role, component of a Polycomb group (PcG) multiprotein PRC1-like complex, a complex class required to maintain the transcriptionally repressive state of many genes, including Hox genes, throughout development. PcG PRC1 complex acts via chromatin remodeling and modification of histones; it mediates monoubiquitination of histone H2A 'Lys-119', rendering chromatin heritably changed in its expressibility. Promotes histone H3 trimethylation at 'Lys-9' (H3K9me3). Binds to histone H3 trimethylated at 'Lys-9' (H3K9me3) or at 'Lys-27' (H3K27me3). Trimethylation at 'Lys-27' (H3K27me3) is important for chromatin recruitment. May possibly also bind trimethylated lysine residues in other proteins (in vitro). Binds non-coding, single-stranded RNA and double-stranded RNA. Plays a role in the timely repression of differentiation-specific genes in pluripotent embryonic stem cells to maintain the undifferentiated state. Regulator of cellular lifespan by maintaining the repression of CDKN2A, but not by inducing telomerase activity. The chain is Chromobox protein homolog 7 (Cbx7) from Mus musculus (Mouse).